Reading from the N-terminus, the 508-residue chain is GTPase Obg (508 aa).

The Obg domain occupies 2–159 (ARFVDRVVLH…HDVILELKSM (158 aa)). Positions 160–341 (ADIGLVGFPS…LKYAMLDLVQ (182 aa)) constitute an OBG-type G domain. Residues 166 to 173 (GFPSAGKS), 191 to 195 (FTTLQ), 212 to 215 (DVPG), 292 to 295 (NKAD), and 322 to 324 (SAV) contribute to the GTP site. Residues Ser173 and Thr193 each coordinate Mg(2+). One can recognise an OCT domain in the interval 364 to 444 (DARKKNKDFE…IGEVSFEWEP (81 aa)).

This sequence belongs to the TRAFAC class OBG-HflX-like GTPase superfamily. OBG GTPase family. As to quaternary structure, monomer. Requires Mg(2+) as cofactor.

It is found in the cytoplasm. Its function is as follows. An essential GTPase which binds GTP, GDP and possibly (p)ppGpp with moderate affinity, with high nucleotide exchange rates and a fairly low GTP hydrolysis rate. Plays a role in control of the cell cycle, stress response, ribosome biogenesis and in those bacteria that undergo differentiation, in morphogenesis control. The sequence is that of GTPase Obg from Corynebacterium diphtheriae (strain ATCC 700971 / NCTC 13129 / Biotype gravis).